A 399-amino-acid chain; its full sequence is MTDFNQAFAELKRGAEEILVEEELLTKLKTGKPLKIKAGFDPTAPDLHLGHTVLINKLRQFQQLGHEVIFLIGDFTGMIGDPTGKNVTRKALTKEDVLANAETYKEQVFKILDPAKTTVAFNSTWMDKLGAAGMLQLASRQTVARMMERDDFKKRYANGQAIAIHEFMYPLVQGWDSVALEADVELGGTDQKFNLLMGRELQKSEGQRPQTVLMMPLLEGLDGVQKMSKSLGNYIGITDTPTDMFGKIMSISDVLMWRYYELLSFKPLEEIEGYKTEIENGKNPRDVKIDLAKELIARFHDEAAAQAAHDEFINRFQKGALPDDMPELTITTENGEIAIANLLKDAGLVGSTSDAFRMIKQGAAKIDSEKVTDRSLVISAGTTAVYQVGKRKFARITVS.

A 'HIGH' region motif is present at residues 42–51; the sequence is PTAPDLHLGH. The short motif at 226–230 is the 'KMSKS' region element; that stretch reads KMSKS. Residue lysine 229 coordinates ATP. In terms of domain architecture, S4 RNA-binding spans 337 to 398; it reads IAIANLLKDA…GKRKFARITV (62 aa).

It belongs to the class-I aminoacyl-tRNA synthetase family. TyrS type 2 subfamily. In terms of assembly, homodimer.

It is found in the cytoplasm. It catalyses the reaction tRNA(Tyr) + L-tyrosine + ATP = L-tyrosyl-tRNA(Tyr) + AMP + diphosphate + H(+). Its function is as follows. Catalyzes the attachment of tyrosine to tRNA(Tyr) in a two-step reaction: tyrosine is first activated by ATP to form Tyr-AMP and then transferred to the acceptor end of tRNA(Tyr). This Colwellia psychrerythraea (strain 34H / ATCC BAA-681) (Vibrio psychroerythus) protein is Tyrosine--tRNA ligase.